Reading from the N-terminus, the 160-residue chain is Small ribosomal subunit protein bS6 (160 aa).

The interval 96 to 160 (RKVKRFIPRA…PRTRKVSKEQ (65 aa)) is disordered. Low complexity predominate over residues 126–145 (TTDASKTEASTEATASKQSE). A compositionally biased stretch (basic residues) spans 151–160 (PRTRKVSKEQ).

Belongs to the bacterial ribosomal protein bS6 family.

In terms of biological role, binds together with bS18 to 16S ribosomal RNA. The polypeptide is Small ribosomal subunit protein bS6 (Metamycoplasma arthritidis (strain 158L3-1) (Mycoplasma arthritidis)).